The following is a 222-amino-acid chain: MTVVIGVLALQGAFIEHVRHVEKCIVENRDFYEKKLSVMTVKDKNQLAQCDALIIPGGESTAMSLIAERTGFYDDLYAFVHNPSKVTWGTCAGMIYISQQLSNEEKLVKTLNLLKVKVKRNAFGRQAQSSTRICDFSNFIPHCNDFPATFIRAPVIEEVLDPEHVQVLYKLDGKDNGGQELIVAAKQKNNILATSFHPELAENDIRFHDWFIREFVLKNYSK.

58 to 60 is a binding site for L-glutamine; it reads GES. Cys-91 acts as the Nucleophile in catalysis. L-glutamine contacts are provided by residues Arg-120 and 151–152; that span reads IR. Active-site charge relay system residues include His-197 and Glu-199.

This sequence belongs to the glutaminase PdxT/SNO family.

The catalysed reaction is aldehydo-D-ribose 5-phosphate + D-glyceraldehyde 3-phosphate + L-glutamine = pyridoxal 5'-phosphate + L-glutamate + phosphate + 3 H2O + H(+). It carries out the reaction L-glutamine + H2O = L-glutamate + NH4(+). It functions in the pathway cofactor biosynthesis; pyridoxal 5'-phosphate biosynthesis. Functionally, catalyzes the hydrolysis of glutamine to glutamate and ammonia as part of the biosynthesis of pyridoxal 5'-phosphate. The resulting ammonia molecule is channeled to the active site of a SNZ isoform. The polypeptide is Probable pyridoxal 5'-phosphate synthase subunit SNO2 (SNO2) (Saccharomyces cerevisiae (strain ATCC 204508 / S288c) (Baker's yeast)).